The following is a 312-amino-acid chain: MNWLTNVVRPKIRNILRRETPENLWIKCPDSGQLVFYKDVEANQFVIPGSNYHMRMGASARLKSMFDNETWFDVALPEVTPDPLKFRDERRYADRIKDARARTGMNDAVKVGFGKLEGMGVVIAVQDFDFMGGSLGMAAGEAIVRGLELAVEKKSPFIVFAASGGARMQEGILSLMQMPRTTVAVQMLREARLPYIVVQTNPTTGGVTASYAMLGDVHIAEPGALIGFAGARVIEQTIREKLPEGFQRAEYLLDHGMVDMVVHRHDLRPTLARLCRLLTKAPAVEHAKPAPQLPPPAKPAETAEAPAVATSA.

The region spanning 24–293 (LWIKCPDSGQ…VEHAKPAPQL (270 aa)) is the CoA carboxyltransferase N-terminal domain. The tract at residues 286 to 312 (HAKPAPQLPPPAKPAETAEAPAVATSA) is disordered. Residues 299–312 (PAETAEAPAVATSA) are compositionally biased toward low complexity.

The protein belongs to the AccD/PCCB family. Acetyl-CoA carboxylase is a heterohexamer composed of biotin carboxyl carrier protein (AccB), biotin carboxylase (AccC) and two subunits each of ACCase subunit alpha (AccA) and ACCase subunit beta (AccD).

The protein resides in the cytoplasm. The catalysed reaction is N(6)-carboxybiotinyl-L-lysyl-[protein] + acetyl-CoA = N(6)-biotinyl-L-lysyl-[protein] + malonyl-CoA. Its pathway is lipid metabolism; malonyl-CoA biosynthesis; malonyl-CoA from acetyl-CoA: step 1/1. Component of the acetyl coenzyme A carboxylase (ACC) complex. Biotin carboxylase (BC) catalyzes the carboxylation of biotin on its carrier protein (BCCP) and then the CO(2) group is transferred by the transcarboxylase to acetyl-CoA to form malonyl-CoA. This Bradyrhizobium sp. (strain ORS 278) protein is Acetyl-coenzyme A carboxylase carboxyl transferase subunit beta.